The chain runs to 644 residues: Threonine--tRNA ligase (644 aa).

Residues 1 to 61 (MVAITLPDGN…TQDASVEIVT (61 aa)) enclose the TGS domain. The catalytic stretch occupies residues 242–533 (DHRKIGKALN…LIEHYAGWMP (292 aa)). Zn(2+)-binding residues include Cys333, His384, and His510.

Belongs to the class-II aminoacyl-tRNA synthetase family. In terms of assembly, homodimer. Zn(2+) serves as cofactor.

The protein resides in the cytoplasm. The catalysed reaction is tRNA(Thr) + L-threonine + ATP = L-threonyl-tRNA(Thr) + AMP + diphosphate + H(+). In terms of biological role, catalyzes the attachment of threonine to tRNA(Thr) in a two-step reaction: L-threonine is first activated by ATP to form Thr-AMP and then transferred to the acceptor end of tRNA(Thr). Also edits incorrectly charged L-seryl-tRNA(Thr). The polypeptide is Threonine--tRNA ligase (Psychrobacter sp. (strain PRwf-1)).